Here is a 261-residue protein sequence, read N- to C-terminus: MQDRNFDDIAEKFSRNIYGTTKGQLRQAILWQDLDRVLAEMGPQKLRVLDAGGGEGQTAIKMAERGHQVILCDLSAQMIDRAKQAAEAKGVSDNMQFIHCAAQDVASHLETPVDLILFHAVLEWVADPRSVLQTLWSVLRPGGVLSLMFYNAHGLLMHNMVAGNFDYVQAGMPKKKKRTLSPDYPRDPAQVYLWLEEAGWQIMGKTGVRVFHDYLREKHQQRDCYEALLELETRYCRQEPYITLGRYIHVTARKPQSKDKV.

Residues arginine 26, 52–53 (GG), aspartate 73, 102–103 (AQ), and histidine 119 each bind S-adenosyl-L-methionine.

This sequence belongs to the class I-like SAM-binding methyltransferase superfamily. CmoM family.

The catalysed reaction is 5-carboxymethoxyuridine(34) in tRNA + S-adenosyl-L-methionine = 5-methoxycarbonylmethoxyuridine(34) in tRNA + S-adenosyl-L-homocysteine. In terms of biological role, catalyzes the methylation of 5-carboxymethoxyuridine (cmo5U) to form 5-methoxycarbonylmethoxyuridine (mcmo5U) at position 34 in tRNAs. Four tRNAs (tRNA(Ala1), tRNA(Ser1), tRNA(Pro3) and tRNA(Thr4)) are fully modified with mcmo5U in stationary-phase E.coli. Also present at low frequency in tRNA(Leu3) and tRNA(Val1). This Escherichia coli (strain K12) protein is tRNA 5-carboxymethoxyuridine methyltransferase.